Reading from the N-terminus, the 93-residue chain is Large ribosomal subunit protein uL23 (93 aa).

The protein belongs to the universal ribosomal protein uL23 family. As to quaternary structure, part of the 50S ribosomal subunit. Contacts protein L29, and trigger factor when it is bound to the ribosome.

Its function is as follows. One of the early assembly proteins it binds 23S rRNA. One of the proteins that surrounds the polypeptide exit tunnel on the outside of the ribosome. Forms the main docking site for trigger factor binding to the ribosome. This chain is Large ribosomal subunit protein uL23, found in Campylobacter jejuni subsp. jejuni serotype O:2 (strain ATCC 700819 / NCTC 11168).